The following is a 341-amino-acid chain: Acetylpolyamine amidohydrolase (341 aa).

Positions 19, 106, and 117 each coordinate substrate. Catalysis depends on His159, which acts as the Proton donor/acceptor. Asp195, His197, and Asp284 together coordinate Zn(2+). Tyr323 lines the substrate pocket.

The protein belongs to the histone deacetylase family. As to quaternary structure, homodimer. Zn(2+) is required as a cofactor.

The enzyme catalyses N-acetylputrescine + H2O = putrescine + acetate. It catalyses the reaction N-acetylcadaverine + H2O = cadaverine + acetate. The catalysed reaction is N(1)-acetylspermine + H2O = spermine + acetate. It carries out the reaction N(1)-acetylspermidine + H2O = spermidine + acetate. The enzyme catalyses N(8)-acetylspermidine + H2O = spermidine + acetate. The protein operates within amine and polyamine metabolism. Zinc ions inhibit enzyme activity in a dose-dependent manner. Inhibited by KCl at concentrations above 10 mM. Inhibited by o-oxyquinoline in vitro, suggesting that it is a metalloprotein. Inhibited by various substrate N(8)-acetylspermidine analogs bearing different metal-binding groups such as trifluoromethylketone, thiol, or hydroxamate, and by hydroxamate analogs of short-chain acetyldiamines. Functionally, involved in polyamine metabolism. Catalyzes the deacetylation of various acetylated polyamines such as N-acetylputrescine, N-acetylcadaverine, N(1)-acetylspermine, N(1)-acetylspermidine and N(8)-acetylspermidine. In vitro, is also able to deacetylate L-Lys(epsilon-acetyl)coumarin, but has very low activity towards the larger tetrapeptide N-acetyl-L-Arg-L-His-L-Lys(epsilon-acetyl)-L-Lys(epsilon-acetyl)coumarin. In Mycoplana ramosa (Mycoplana bullata), this protein is Acetylpolyamine amidohydrolase.